Here is a 313-residue protein sequence, read N- to C-terminus: uncharacterized protein (313 aa).

This is an uncharacterized protein from Archaeoglobus fulgidus (strain ATCC 49558 / DSM 4304 / JCM 9628 / NBRC 100126 / VC-16).